The following is a 138-amino-acid chain: Nucleoside diphosphate kinase (138 aa).

Lysine 9, phenylalanine 57, arginine 85, threonine 91, arginine 102, and asparagine 112 together coordinate ATP. The Pros-phosphohistidine intermediate role is filled by histidine 115.

This sequence belongs to the NDK family. As to quaternary structure, homotetramer. The cofactor is Mg(2+).

The protein resides in the cytoplasm. It carries out the reaction a 2'-deoxyribonucleoside 5'-diphosphate + ATP = a 2'-deoxyribonucleoside 5'-triphosphate + ADP. It catalyses the reaction a ribonucleoside 5'-diphosphate + ATP = a ribonucleoside 5'-triphosphate + ADP. Major role in the synthesis of nucleoside triphosphates other than ATP. The ATP gamma phosphate is transferred to the NDP beta phosphate via a ping-pong mechanism, using a phosphorylated active-site intermediate. The protein is Nucleoside diphosphate kinase of Trichlorobacter lovleyi (strain ATCC BAA-1151 / DSM 17278 / SZ) (Geobacter lovleyi).